The primary structure comprises 149 residues: SsrA-binding protein (149 aa).

The protein belongs to the SmpB family.

The protein resides in the cytoplasm. Required for rescue of stalled ribosomes mediated by trans-translation. Binds to transfer-messenger RNA (tmRNA), required for stable association of tmRNA with ribosomes. tmRNA and SmpB together mimic tRNA shape, replacing the anticodon stem-loop with SmpB. tmRNA is encoded by the ssrA gene; the 2 termini fold to resemble tRNA(Ala) and it encodes a 'tag peptide', a short internal open reading frame. During trans-translation Ala-aminoacylated tmRNA acts like a tRNA, entering the A-site of stalled ribosomes, displacing the stalled mRNA. The ribosome then switches to translate the ORF on the tmRNA; the nascent peptide is terminated with the 'tag peptide' encoded by the tmRNA and targeted for degradation. The ribosome is freed to recommence translation, which seems to be the essential function of trans-translation. This Wolbachia sp. subsp. Brugia malayi (strain TRS) protein is SsrA-binding protein.